Here is a 526-residue protein sequence, read N- to C-terminus: Peptide chain release factor 3 (526 aa).

The tr-type G domain maps to 9-277 (DKRRTFAIIS…GIVEWAPKPL (269 aa)). GTP contacts are provided by residues 18-25 (SHPDAGKT), 86-90 (DTPGH), and 140-143 (NKLD).

Belongs to the TRAFAC class translation factor GTPase superfamily. Classic translation factor GTPase family. PrfC subfamily.

Its subcellular location is the cytoplasm. In terms of biological role, increases the formation of ribosomal termination complexes and stimulates activities of RF-1 and RF-2. It binds guanine nucleotides and has strong preference for UGA stop codons. It may interact directly with the ribosome. The stimulation of RF-1 and RF-2 is significantly reduced by GTP and GDP, but not by GMP. This Shewanella baltica (strain OS155 / ATCC BAA-1091) protein is Peptide chain release factor 3.